The following is a 549-amino-acid chain: Urocanate hydratase (549 aa).

NAD(+) is bound by residues 46–47 (GG), Q124, 170–172 (GMG), E190, R195, 236–237 (NA), 257–261 (QTSAH), 267–268 (YV), and Y316. Residue C404 is part of the active site. G486 serves as a coordination point for NAD(+).

The protein belongs to the urocanase family. Requires NAD(+) as cofactor.

It localises to the cytoplasm. It catalyses the reaction 4-imidazolone-5-propanoate = trans-urocanate + H2O. The protein operates within amino-acid degradation; L-histidine degradation into L-glutamate; N-formimidoyl-L-glutamate from L-histidine: step 2/3. Functionally, catalyzes the conversion of urocanate to 4-imidazolone-5-propionate. This Natranaerobius thermophilus (strain ATCC BAA-1301 / DSM 18059 / JW/NM-WN-LF) protein is Urocanate hydratase.